Consider the following 347-residue polypeptide: Holliday junction branch migration complex subunit RuvB (347 aa).

The large ATPase domain (RuvB-L) stretch occupies residues 1 to 182 (MSAQNPVLTP…FGIPVRLSFY (182 aa)). ATP contacts are provided by residues Leu-21, Arg-22, Gly-63, Lys-66, Thr-67, Thr-68, 129–131 (EDF), Arg-172, Tyr-182, and Arg-219. Position 67 (Thr-67) interacts with Mg(2+). Residues 183 to 253 (TVEELELIVR…IADEALTRLL (71 aa)) form a small ATPAse domain (RuvB-S) region. The interval 256 to 347 (NMGLDQLDTR…QFRLTLEDDD (92 aa)) is head domain (RuvB-H). DNA is bound by residues Arg-292, Arg-311, and Arg-316.

It belongs to the RuvB family. As to quaternary structure, homohexamer. Forms an RuvA(8)-RuvB(12)-Holliday junction (HJ) complex. HJ DNA is sandwiched between 2 RuvA tetramers; dsDNA enters through RuvA and exits via RuvB. An RuvB hexamer assembles on each DNA strand where it exits the tetramer. Each RuvB hexamer is contacted by two RuvA subunits (via domain III) on 2 adjacent RuvB subunits; this complex drives branch migration. In the full resolvosome a probable DNA-RuvA(4)-RuvB(12)-RuvC(2) complex forms which resolves the HJ.

The protein resides in the cytoplasm. It carries out the reaction ATP + H2O = ADP + phosphate + H(+). Its function is as follows. The RuvA-RuvB-RuvC complex processes Holliday junction (HJ) DNA during genetic recombination and DNA repair, while the RuvA-RuvB complex plays an important role in the rescue of blocked DNA replication forks via replication fork reversal (RFR). RuvA specifically binds to HJ cruciform DNA, conferring on it an open structure. The RuvB hexamer acts as an ATP-dependent pump, pulling dsDNA into and through the RuvAB complex. RuvB forms 2 homohexamers on either side of HJ DNA bound by 1 or 2 RuvA tetramers; 4 subunits per hexamer contact DNA at a time. Coordinated motions by a converter formed by DNA-disengaged RuvB subunits stimulates ATP hydrolysis and nucleotide exchange. Immobilization of the converter enables RuvB to convert the ATP-contained energy into a lever motion, pulling 2 nucleotides of DNA out of the RuvA tetramer per ATP hydrolyzed, thus driving DNA branch migration. The RuvB motors rotate together with the DNA substrate, which together with the progressing nucleotide cycle form the mechanistic basis for DNA recombination by continuous HJ branch migration. Branch migration allows RuvC to scan DNA until it finds its consensus sequence, where it cleaves and resolves cruciform DNA. In Allorhizobium ampelinum (strain ATCC BAA-846 / DSM 112012 / S4) (Agrobacterium vitis (strain S4)), this protein is Holliday junction branch migration complex subunit RuvB.